The chain runs to 97 residues: Small ribosomal subunit protein bS20 (97 aa).

Belongs to the bacterial ribosomal protein bS20 family.

In terms of biological role, binds directly to 16S ribosomal RNA. This chain is Small ribosomal subunit protein bS20, found in Prochlorococcus marinus (strain MIT 9312).